Here is a 485-residue protein sequence, read N- to C-terminus: GlcNAc-binding protein A (485 aa).

The first 29 residues, M1–A29, serve as a signal peptide directing secretion. One can recognise a Chitin-binding type-4 domain in the interval V30 to F200. In terms of domain architecture, Chitin-binding type-3 spans A437–W478.

The protein belongs to the GbpA family.

It localises to the secreted. Its function is as follows. Probably interacts with GlcNAc residues. May promote attachment to both epithelial cell surfaces and chitin. In Vibrio vulnificus (strain YJ016), this protein is GlcNAc-binding protein A.